The following is a 390-amino-acid chain: Probable tRNA sulfurtransferase (390 aa).

The 103-residue stretch at 60-162 (KQIIDDLKEV…YDCAIVYGHK (103 aa)) folds into the THUMP domain. ATP is bound by residues 180–181 (LL), 205–206 (TF), Arg264, Gly286, and Gln295.

The protein belongs to the ThiI family.

The protein resides in the cytoplasm. The catalysed reaction is [ThiI sulfur-carrier protein]-S-sulfanyl-L-cysteine + a uridine in tRNA + 2 reduced [2Fe-2S]-[ferredoxin] + ATP + H(+) = [ThiI sulfur-carrier protein]-L-cysteine + a 4-thiouridine in tRNA + 2 oxidized [2Fe-2S]-[ferredoxin] + AMP + diphosphate. It catalyses the reaction [ThiS sulfur-carrier protein]-C-terminal Gly-Gly-AMP + S-sulfanyl-L-cysteinyl-[cysteine desulfurase] + AH2 = [ThiS sulfur-carrier protein]-C-terminal-Gly-aminoethanethioate + L-cysteinyl-[cysteine desulfurase] + A + AMP + 2 H(+). The protein operates within cofactor biosynthesis; thiamine diphosphate biosynthesis. Functionally, catalyzes the ATP-dependent transfer of a sulfur to tRNA to produce 4-thiouridine in position 8 of tRNAs, which functions as a near-UV photosensor. Also catalyzes the transfer of sulfur to the sulfur carrier protein ThiS, forming ThiS-thiocarboxylate. This is a step in the synthesis of thiazole, in the thiamine biosynthesis pathway. The sulfur is donated as persulfide by IscS. This is Probable tRNA sulfurtransferase from Ureaplasma parvum serovar 3 (strain ATCC 27815 / 27 / NCTC 11736).